We begin with the raw amino-acid sequence, 511 residues long: GMP synthase [glutamine-hydrolyzing] (511 aa).

The 196-residue stretch at 3–198 (SVLVLDFGSQ…LLNIAAITPD (196 aa)) folds into the Glutamine amidotransferase type-1 domain. The active-site Nucleophile is the Cys80. Active-site residues include His172 and Glu174. The GMPS ATP-PPase domain maps to 199–386 (WSSKSFIEHQ…LGIPEDILMR (188 aa)). 226–232 (SGGVDST) serves as a coordination point for ATP.

In terms of assembly, homodimer.

It carries out the reaction XMP + L-glutamine + ATP + H2O = GMP + L-glutamate + AMP + diphosphate + 2 H(+). It participates in purine metabolism; GMP biosynthesis; GMP from XMP (L-Gln route): step 1/1. Its function is as follows. Catalyzes the synthesis of GMP from XMP. The protein is GMP synthase [glutamine-hydrolyzing] of Chlorobium chlorochromatii (strain CaD3).